The sequence spans 590 residues: MNERLKEKLAVLPEQPGCYLMKDKHGTVIYVGKAKSLKARVRSYFTGTHDGKTQRLVEEIADFEYIVTSSNAEALILEMNLIKKHDPKYNVMLKDDKSYPFIKITAEKHPRLLITRKVKKDGGKYFGPYPNVQAANETKKLLDRLYPLRKCSTLPSRACLYYHMGQCLAPCVHPVSDEQNKAMVEQIVRFLNGGYEDVKRELAEKMHEAAETLEFERAKEYRDQIAAIEMTMEKQKMMLNDFIDRDVFGYAYDKGWMCVQVFFLRQGKLIERDVSIFPLYQDPDEEMLTFLGQFYAKAHHLKPKEVVLPSDIDGELARELLGVAVVQPKKGKKKELVELASKNAAIALKEKFYFIERDEERTIKAVERLGERLGIPAPRRIEAFDNSNIYGADPVSALVVFLDGKPAKKEYRKYKVKTVAGPNDYETMREVVRRRYTRVLKEGLPLPDLIIIDGGKGHLSAVRDVLENELGLDVPLAGLAKDEKHRTSELLAGDPPDVVPLDRQSQEFYLLQRIQDEVHRFAVMFHRKTRQKTMFHSVLDDIPGVGEKRKKALLNYFGSVKKMKEATVEELQRANIPRAVAEKIYEKLHE.

One can recognise a GIY-YIG domain in the interval 14–91 (EQPGCYLMKD…IKKHDPKYNV (78 aa)). The 36-residue stretch at 196–231 (EDVKRELAEKMHEAAETLEFERAKEYRDQIAAIEMT) folds into the UVR domain.

Belongs to the UvrC family. Interacts with UvrB in an incision complex.

The protein resides in the cytoplasm. The UvrABC repair system catalyzes the recognition and processing of DNA lesions. UvrC both incises the 5' and 3' sides of the lesion. The N-terminal half is responsible for the 3' incision and the C-terminal half is responsible for the 5' incision. The sequence is that of UvrABC system protein C from Geobacillus kaustophilus (strain HTA426).